A 226-amino-acid chain; its full sequence is UPF0173 metal-dependent hydrolase Minf_0129 (226 aa).

The protein belongs to the UPF0173 family.

The chain is UPF0173 metal-dependent hydrolase Minf_0129 from Methylacidiphilum infernorum (isolate V4) (Methylokorus infernorum (strain V4)).